Consider the following 601-residue polypeptide: UBA domain-containing protein 3 (601 aa).

The 123-residue stretch at Glu7 to Asn129 folds into the Arf-GAP domain. Disordered stretches follow at residues Asp123–Tyr158 and Glu289–Gly310. The segment covering Thr139–Ser156 has biased composition (low complexity). The UBA domain maps to Arg157–His197.

In Schizosaccharomyces pombe (strain 972 / ATCC 24843) (Fission yeast), this protein is UBA domain-containing protein 3 (ucp3).